The following is a 170-amino-acid chain: Small ribosomal subunit protein eS7 (170 aa).

Belongs to the eukaryotic ribosomal protein eS7 family. In terms of assembly, component of the small ribosomal subunit.

Its subcellular location is the cytoplasm. The protein is Small ribosomal subunit protein eS7 (RPS7) of Encephalitozoon cuniculi (strain GB-M1) (Microsporidian parasite).